The chain runs to 571 residues: Proline--tRNA ligase (571 aa).

Belongs to the class-II aminoacyl-tRNA synthetase family. ProS type 1 subfamily. Homodimer.

Its subcellular location is the cytoplasm. It carries out the reaction tRNA(Pro) + L-proline + ATP = L-prolyl-tRNA(Pro) + AMP + diphosphate. Functionally, catalyzes the attachment of proline to tRNA(Pro) in a two-step reaction: proline is first activated by ATP to form Pro-AMP and then transferred to the acceptor end of tRNA(Pro). As ProRS can inadvertently accommodate and process non-cognate amino acids such as alanine and cysteine, to avoid such errors it has two additional distinct editing activities against alanine. One activity is designated as 'pretransfer' editing and involves the tRNA(Pro)-independent hydrolysis of activated Ala-AMP. The other activity is designated 'posttransfer' editing and involves deacylation of mischarged Ala-tRNA(Pro). The misacylated Cys-tRNA(Pro) is not edited by ProRS. The polypeptide is Proline--tRNA ligase (Vibrio vulnificus (strain YJ016)).